The chain runs to 461 residues: Lysosomal dipeptide transporter MFSD1 (461 aa).

Over residues 1-13 the composition is skewed to basic and acidic residues; that stretch reads MADREEHQGLLDG. The tract at residues 1-22 is disordered; sequence MADREEHQGLLDGDRDEDEGDK. Positions 10-11 match the Dileucine internalization motif motif; sequence LL. 10 helical membrane-spanning segments follow: residues 37 to 57, 81 to 101, 111 to 131, 134 to 154, 264 to 284, 302 to 322, 331 to 351, 359 to 379, 390 to 410, and 416 to 436; these read LLHR…SYFC, QLYA…GFLL, TVIF…GALA, FWLM…LAVA, LWLI…FIGL, AINS…GFLV, WVML…FTFW, LLGV…AFVV, FMQS…GSIL, and LFLE…VVLL.

It belongs to the major facilitator superfamily. In terms of assembly, homodimer. Interacts with lysosomal protein GLMP (via lumenal domain); the interaction starts while both proteins are still in the endoplasmic reticulum and is required for stabilization of MFSD1 in lysosomes but has no direct effect on its targeting to lysosomes or transporter activity.

It is found in the lysosome membrane. It carries out the reaction L-alpha-aminoacyl-L-arginine(out) = L-alpha-aminoacyl-L-arginine(in). The catalysed reaction is L-arginyl-L-alpha-amino acid(out) = L-arginyl-L-alpha-amino acid(in). The enzyme catalyses L-arginyl-glycine(out) = L-arginyl-glycine(in). It catalyses the reaction L-alpha-aminoacyl-L-lysine(out) = L-alpha-aminoacyl-L-lysine(in). It carries out the reaction L-aspartyl-L-lysine(out) = L-aspartyl-L-lysine(in). The catalysed reaction is L-alanyl-L-lysine(out) = L-alanyl-L-lysine(in). The enzyme catalyses L-lysyl-L-alpha-amino acid(out) = L-lysyl-L-alpha-amino acid(in). It catalyses the reaction L-lysyl-L-alanine(out) = L-lysyl-L-alanine(in). It carries out the reaction L-lysyl-L-lysine(out) = L-lysyl-L-lysine(in). The catalysed reaction is L-lysyl-glycine(out) = L-lysyl-glycine(in). The enzyme catalyses L-alpha-aminoacyl-L-histidine(out) = L-alpha-aminoacyl-L-histidine(in). It catalyses the reaction L-histidyl-L-alpha-amino acid(out) = L-histidyl-L-alpha-amino acid(in). It carries out the reaction L-histidyl-glycine(out) = L-histidyl-glycine(in). In terms of biological role, lysosomal dipeptide uniporter that selectively exports lysine, arginine or histidine-containing dipeptides with a net positive charge from the lysosome lumen into the cytosol. Could play a role in a specific type of protein O-glycosylation indirectly regulating macrophages migration and tissue invasion. Also essential for liver homeostasis. The protein is Lysosomal dipeptide transporter MFSD1 (mfsd1) of Danio rerio (Zebrafish).